A 440-amino-acid polypeptide reads, in one-letter code: Ribosomal protein uS12 methylthiotransferase RimO (440 aa).

An MTTase N-terminal domain is found at 8-125; that stretch reads LRCHAISLGC…WNEQILLALN (118 aa). Positions 17, 52, 87, 152, 156, and 159 each coordinate [4Fe-4S] cluster. A Radical SAM core domain is found at 138–368; sequence TTGKSYAWLK…MEIQLKISEK (231 aa). A TRAM domain is found at 371 to 439; the sequence is KNFVGKRLSL…SYDLVALADS (69 aa).

Belongs to the methylthiotransferase family. RimO subfamily. It depends on [4Fe-4S] cluster as a cofactor.

It localises to the cytoplasm. The catalysed reaction is L-aspartate(89)-[ribosomal protein uS12]-hydrogen + (sulfur carrier)-SH + AH2 + 2 S-adenosyl-L-methionine = 3-methylsulfanyl-L-aspartate(89)-[ribosomal protein uS12]-hydrogen + (sulfur carrier)-H + 5'-deoxyadenosine + L-methionine + A + S-adenosyl-L-homocysteine + 2 H(+). Catalyzes the methylthiolation of an aspartic acid residue of ribosomal protein uS12. The sequence is that of Ribosomal protein uS12 methylthiotransferase RimO from Lawsonia intracellularis (strain PHE/MN1-00).